We begin with the raw amino-acid sequence, 21 residues long: Brevinin-2-related peptide (21 aa).

L21 bears the Leucine amide mark.

As to expression, expressed by the skin glands.

The protein resides in the secreted. In terms of biological role, antimicrobial peptide with activity against Gram-negative and Gram-positive bacteria (MIC=13 uM against E.coli, MIC=25 uM against S.aureus) and fungi (MIC=25 uM against C.albicans). Also shows hemolytic activity (HC(50)=50 uM). In vitro, shows moderate inhibitory activity against HIV. This is Brevinin-2-related peptide from Lithobates septentrionalis (Mink frog).